Here is a 323-residue protein sequence, read N- to C-terminus: MSNLTLSQFLQQEKGNLTPELAQVIDTIAATCKTIDQALQKGALAGILGSAGNENVQGETQKKLDVISNDYLIDALKVHPHVGGLASEELDDFTPAQENGEYLVLFDPLDGSSNIDINMCVGTIFSILPAKNAVTQAQDFMQAGTQQVAAGYVLYGPSTMMALTVGNGVAFFTLDPETQTFLLTTENVQVSADTQEFAINASNQRHWEQPVKQYIEELLAGKTSVREKDFNMRWVACMVGDVHRILCRGGIFLYPYDLKDPKKAGRLRLMYEANPMSMLIEQAGGASTTGRVRILEIEPTELHQRVPVIIGSKNEVERVTSYH.

Residues E88, D107, L109, and D110 each coordinate Mg(2+). Substrate-binding positions include 110–113 (DGSS) and N200. Position 272 (E272) interacts with Mg(2+).

This sequence belongs to the FBPase class 1 family. In terms of assembly, homotetramer. The cofactor is Mg(2+).

Its subcellular location is the cytoplasm. It catalyses the reaction beta-D-fructose 1,6-bisphosphate + H2O = beta-D-fructose 6-phosphate + phosphate. It functions in the pathway carbohydrate biosynthesis; gluconeogenesis. The protein is Fructose-1,6-bisphosphatase class 1 of Acinetobacter baumannii (strain ACICU).